The sequence spans 314 residues: MTDSSATRPPRLPRRDVHGVLLLDKPLGLSSNDALVRAKRLLRANKAGHTGTLDPLATGLLPLCFGEATKFSQDLLDADKTYEAKVRLGATTTTGDAEGEIVVERLVTCDHDALDAAVARFTGEIEQVPPMYSALKKDGKPLYEYARAGQTVERAARQVTIHAITLLDVDLPAAMFTMRVTCSKGTYIRTLAEDVGEALGCGAHLIGLRRTAVGDLTLEGAVTLEQIDAQADEARPGMLAPVDALLQRCPPVHLDAAAMGRFLQGQRIARRDLPEGQVPPDEGTLARVYGDEGRLLGVARMKEGALRPERLVKL.

Residue aspartate 54 is the Nucleophile of the active site.

It belongs to the pseudouridine synthase TruB family. Type 1 subfamily.

It catalyses the reaction uridine(55) in tRNA = pseudouridine(55) in tRNA. Its function is as follows. Responsible for synthesis of pseudouridine from uracil-55 in the psi GC loop of transfer RNAs. The polypeptide is tRNA pseudouridine synthase B (Cupriavidus metallidurans (strain ATCC 43123 / DSM 2839 / NBRC 102507 / CH34) (Ralstonia metallidurans)).